Consider the following 170-residue polypeptide: Shikimate kinase (170 aa).

Position 11 to 16 (11 to 16) interacts with ATP; the sequence is LSGKST. S15 serves as a coordination point for Mg(2+). The substrate site is built by D33, R57, and G79. R119 serves as a coordination point for ATP. R137 provides a ligand contact to substrate.

Belongs to the shikimate kinase family. As to quaternary structure, monomer. The cofactor is Mg(2+).

It is found in the cytoplasm. It carries out the reaction shikimate + ATP = 3-phosphoshikimate + ADP + H(+). It participates in metabolic intermediate biosynthesis; chorismate biosynthesis; chorismate from D-erythrose 4-phosphate and phosphoenolpyruvate: step 5/7. Catalyzes the specific phosphorylation of the 3-hydroxyl group of shikimic acid using ATP as a cosubstrate. This Clostridium botulinum (strain ATCC 19397 / Type A) protein is Shikimate kinase.